The chain runs to 147 residues: Hemoglobin subunit epsilon (147 aa).

A Globin domain is found at 3 to 147 (HFTAEEKTAI…VASALAHKYH (145 aa)). Residues S14 and S51 each carry the phosphoserine modification. H64 and H93 together coordinate heme b.

Belongs to the globin family. As to expression, red blood cells.

Functionally, hemoglobin epsilon chain is an embryonic-type beta-type chain found in prenatal and neonatal marsupials. This is Hemoglobin subunit epsilon (HBE1) from Notamacropus eugenii (Tammar wallaby).